The sequence spans 674 residues: Methionine--tRNA ligase (674 aa).

The short motif at 12-22 is the 'HIGH' region element; the sequence is PYANGPIHLGH. Zn(2+)-binding residues include cysteine 143, cysteine 146, cysteine 156, and cysteine 159. Residues 328–332 carry the 'KMSKS' region motif; sequence KMSKS. Position 331 (lysine 331) interacts with ATP. The region spanning 573–674 is the tRNA-binding domain; it reads SFAKLDLRIA…EGARPGMRVK (102 aa).

Belongs to the class-I aminoacyl-tRNA synthetase family. MetG type 1 subfamily. As to quaternary structure, homodimer. Zn(2+) serves as cofactor.

Its subcellular location is the cytoplasm. It catalyses the reaction tRNA(Met) + L-methionine + ATP = L-methionyl-tRNA(Met) + AMP + diphosphate. Functionally, is required not only for elongation of protein synthesis but also for the initiation of all mRNA translation through initiator tRNA(fMet) aminoacylation. This chain is Methionine--tRNA ligase, found in Nitrosococcus oceani (strain ATCC 19707 / BCRC 17464 / JCM 30415 / NCIMB 11848 / C-107).